A 340-amino-acid chain; its full sequence is Ferrochelatase (340 aa).

Fe cation contacts are provided by His189 and Glu292.

It belongs to the ferrochelatase family.

The protein resides in the cytoplasm. The catalysed reaction is heme b + 2 H(+) = protoporphyrin IX + Fe(2+). It functions in the pathway porphyrin-containing compound metabolism; protoheme biosynthesis; protoheme from protoporphyrin-IX: step 1/1. In terms of biological role, catalyzes the ferrous insertion into protoporphyrin IX. This Pseudomonas syringae pv. tomato (strain ATCC BAA-871 / DC3000) protein is Ferrochelatase.